The chain runs to 437 residues: uncharacterized protein (437 aa).

2 helical membrane-spanning segments follow: residues 102–122 (GIYM…PVII) and 272–292 (ILSI…ATVW).

The protein belongs to the herpesviridae UL49 family.

Its subcellular location is the host membrane. This is an uncharacterized protein from Connochaetes taurinus (Blue wildebeest).